The primary structure comprises 471 residues: MDILCEENTSLSSTTNSLMQLNEDTRLYSNDFNSGEANTSDAFNWTVESENRTNLSCEGCLSPSCLSLLHLQEKNWSALLTAVVIILTIAGNILVIMAVSLEKKLQNATNYFLMSLAIADMLLGFLVMPVSMLTILYGYRWPLPSKLCAVWIYLDVLFSTASIMHLCAISLDRYVAIQNPIHHSRFNSRTKAFLKIIAVWTISVGISMPIPVFGLQDDSKVFKEGSCLLADDNFVLIGSFVSFFIPLTIMVITYFLTIKSLQKEATLCVSDLGTRAKLASFSFLPQSSLSSEKLFQRSIHRDPGSYTGRRTMQSISNEQKACKVLGIVFFLFVVMWCPFFITNIMAVICKESCNEDVIGALLNVFVWIGYLSSAVNPLVYTLFNKTYRSAFSRYIQCQYKENKKPLQLILVNTIPALAYKSSQLQMGQKKNSKQDAKTTDNDCSMVALGKQHSEDASKDNSDGVNEKVSCV.

The Extracellular segment spans residues 1–80; sequence MDILCEENTS…LQEKNWSALL (80 aa). N8, N38, N44, N51, and N54 each carry an N-linked (GlcNAc...) asparagine glycan. The helical transmembrane segment at 81–97 threads the bilayer; the sequence is TAVVIILTIAGNILVIM. Topologically, residues 98-111 are cytoplasmic; it reads AVSLEKKLQNATNY. A helical transmembrane segment spans residues 112–137; sequence FLMSLAIADMLLGFLVMPVSMLTILY. Topologically, residues 138 to 146 are extracellular; that stretch reads GYRWPLPSK. The chain crosses the membrane as a helical span at residues 147-171; sequence LCAVWIYLDVLFSTASIMHLCAISL. A disulfide bridge links C148 with C227. Residue D155 participates in serotonin binding. The DRY motif; important for ligand-induced conformation changes motif lies at 172 to 174; the sequence is DRY. Residues 172–191 are Cytoplasmic-facing; sequence DRYVAIQNPIHHSRFNSRTK. A helical transmembrane segment spans residues 192-215; that stretch reads AFLKIIAVWTISVGISMPIPVFGL. Topologically, residues 216–232 are extracellular; sequence QDDSKVFKEGSCLLADD. Residues 233-258 traverse the membrane as a helical segment; that stretch reads NFVLIGSFVSFFIPLTIMVITYFLTI. At 259–322 the chain is on the cytoplasmic side; the sequence is KSLQKEATLC…QSISNEQKAC (64 aa). S280 carries the phosphoserine modification. The chain crosses the membrane as a helical span at residues 323-348; sequence KVLGIVFFLFVVMWCPFFITNIMAVI. N343 lines the serotonin pocket. C349 and C353 are disulfide-bonded. At 349-356 the chain is on the extracellular side; it reads CKESCNED. Residues 357 to 382 traverse the membrane as a helical segment; sequence VIGALLNVFVWIGYLSSAVNPLVYTL. The NPxxY motif; important for ligand-induced conformation changes and signaling motif lies at 376–380; sequence NPLVY. Residues 383 to 471 are Cytoplasmic-facing; that stretch reads FNKTYRSAFS…DGVNEKVSCV (89 aa). A disordered region spans residues 450-471; sequence KQHSEDASKDNSDGVNEKVSCV. Residues 451–465 show a composition bias toward basic and acidic residues; that stretch reads QHSEDASKDNSDGVN. The PDZ-binding signature appears at 469-471; the sequence is SCV.

The protein belongs to the G-protein coupled receptor 1 family. In terms of assembly, interacts (via C-terminus) with MPDZ and PATJ. May interact (via C-terminus) with MPP3, PRDX6, DLG4, DLG1, CASK, APBA1 and MAGI2. Interacts with GRM2 and DRD2; this may affect signaling.

It localises to the cell membrane. The protein resides in the cell projection. It is found in the dendrite. The protein localises to the axon. Its subcellular location is the cytoplasmic vesicle. It localises to the membrane. The protein resides in the caveola. It is found in the presynapse. Its activity is regulated as follows. G-protein coupled receptor activity is regulated by lipids: oleamide increases HTR2A-mediated activity. Functionally, G-protein coupled receptor for 5-hydroxytryptamine (serotonin). Also functions as a receptor for various drugs and psychoactive substances, including mescaline, psilocybin, 1-(2,5-dimethoxy-4-iodophenyl)-2-aminopropane (DOI) and lysergic acid diethylamide (LSD). Ligand binding causes a conformation change that triggers signaling via guanine nucleotide-binding proteins (G proteins) and modulates the activity of downstream effectors. HTR2A is coupled to G(q)/G(11) G alpha proteins and activates phospholipase C-beta, releasing diacylglycerol (DAG) and inositol 1,4,5-trisphosphate (IP3) second messengers that modulate the activity of phosphatidylinositol 3-kinase and promote the release of Ca(2+) ions from intracellular stores, respectively. Beta-arrestin family members inhibit signaling via G proteins and mediate activation of alternative signaling pathways. Affects neural activity, perception, cognition and mood. Plays a role in the regulation of behavior, including responses to anxiogenic situations and psychoactive substances. Plays a role in intestinal smooth muscle contraction, and may play a role in arterial vasoconstriction. This Macaca mulatta (Rhesus macaque) protein is 5-hydroxytryptamine receptor 2A (HTR2A).